A 751-amino-acid polypeptide reads, in one-letter code: Polyadenylate-binding protein, cytoplasmic and nuclear (751 aa).

Polar residues-rich tracts occupy residues 1–26 (MSAE…NPAA) and 36–50 (ESAS…NQPH). The disordered stretch occupies residues 1–50 (MSAEVSTTPAADNTVNGTPEATNPAATSAPEVTAVESASPSATPSANQPH). RRM domains lie at 52 to 130 (ASLY…WSQR), 140 to 217 (GNVF…HHIS), 233 to 310 (TNVY…RAQK), and 336 to 458 (VNLY…LAQR). Disordered regions lie at residues 371 to 413 (TVTA…KKTE) and 601 to 643 (GQGM…REEV). Over residues 379-413 (ESEKEKESNKENEKEGEEKTEEKPKESEEEAKKTE) the composition is skewed to basic and acidic residues. The span at 603–629 (GMRGPGYGQGRGGAPVQGGPRPQGGRG) shows a compositional bias: gly residues. Residues 646-723 (TGGLTAQTLN…ALSVYDEYMK (78 aa)) form the PABC domain. The segment at 725–751 (KGEGEAPAEPAKPKEDAAETATEENKS) is disordered. Basic and acidic residues predominate over residues 735 to 751 (AKPKEDAAETATEENKS).

This sequence belongs to the polyadenylate-binding protein type-1 family.

It is found in the cytoplasm. The protein localises to the nucleus. Functionally, binds the poly(A) tail of mRNA. Appears to be an important mediator of the multiple roles of the poly(A) tail in mRNA biogenesis, stability and translation. In the nucleus, involved in both mRNA cleavage and polyadenylation. Is also required for efficient mRNA export to the cytoplasm. Acts in concert with a poly(A)-specific nuclease (PAN) to affect poly(A) tail shortening, which may occur concomitantly with either nucleocytoplasmic mRNA transport or translational initiation. In the cytoplasm, stimulates translation initiation and regulates mRNA decay through translation termination-coupled poly(A) shortening, probably mediated by PAN. This is Polyadenylate-binding protein, cytoplasmic and nuclear (pab1) from Neosartorya fischeri (strain ATCC 1020 / DSM 3700 / CBS 544.65 / FGSC A1164 / JCM 1740 / NRRL 181 / WB 181) (Aspergillus fischerianus).